Consider the following 306-residue polypeptide: Agmatinase (306 aa).

The Mn(2+) site is built by His-126, Asp-149, His-151, Asp-153, Asp-230, and Asp-232.

This sequence belongs to the arginase family. Agmatinase subfamily. Requires Mn(2+) as cofactor.

It carries out the reaction agmatine + H2O = urea + putrescine. The protein operates within amine and polyamine biosynthesis; putrescine biosynthesis via agmatine pathway; putrescine from agmatine: step 1/1. Catalyzes the formation of putrescine from agmatine. This Salmonella dublin (strain CT_02021853) protein is Agmatinase.